Here is a 379-residue protein sequence, read N- to C-terminus: Glutamate 5-kinase (379 aa).

Lysine 19 is an ATP binding site. Serine 59, aspartate 146, and asparagine 158 together coordinate substrate. ATP-binding positions include 178–179 (TD) and 220–226 (TGGMATK). Positions 285 to 363 (SGDIIIDDGA…KDIISILGHD (79 aa)) constitute a PUA domain.

This sequence belongs to the glutamate 5-kinase family.

Its subcellular location is the cytoplasm. It catalyses the reaction L-glutamate + ATP = L-glutamyl 5-phosphate + ADP. The protein operates within amino-acid biosynthesis; L-proline biosynthesis; L-glutamate 5-semialdehyde from L-glutamate: step 1/2. In terms of biological role, catalyzes the transfer of a phosphate group to glutamate to form L-glutamate 5-phosphate. This Vibrio parahaemolyticus serotype O3:K6 (strain RIMD 2210633) protein is Glutamate 5-kinase.